A 1098-amino-acid polypeptide reads, in one-letter code: Probable arabinosyltransferase B (1098 aa).

The next 12 helical transmembrane spans lie at 28–50, 217–239, 271–293, 402–419, 434–456, 472–494, 541–558, 570–587, 597–619, 626–648, 663–685, and 698–720; these read WVAT…LPVV, LKLL…LWRL, ASWR…WHVI, LRPE…YVLI, AVVT…AALV, LVGT…TVVF, FGFL…FIML, PAWR…FLMF, GLFA…PSVL, MAFL…GWWY, IDGI…YAAW, and LIRA…VFVA.

The protein belongs to the emb family.

The protein localises to the cell membrane. Functionally, arabinosyl transferase responsible for the polymerization of arabinose into the arabinan of arabinogalactan. This is Probable arabinosyltransferase B (embB) from Mycobacterium bovis (strain ATCC BAA-935 / AF2122/97).